Reading from the N-terminus, the 182-residue chain is MEHEVVSALAAFTQRYVACWQQEKGHLPASEALYGIPSPCIVENHEDTVYWSPQPFAPSVALDGVERALEISLHPDVHAFYTAQYAGDMAAQFDSLSCQLLQVWSEEDFTRMQENLIGHLLTQKRLKLTPTLFLATTDSEMTMVSLCNVSGEIVLEAFGTKKRQHLAPTLAAFLSGLNPLAV.

This sequence belongs to the Syd family.

It is found in the cell inner membrane. Interacts with the SecY protein in vivo. May bind preferentially to an uncomplexed state of SecY, thus functioning either as a chelating agent for excess SecY in the cell or as a regulatory factor that negatively controls the translocase function. The polypeptide is Protein Syd (Pectobacterium atrosepticum (strain SCRI 1043 / ATCC BAA-672) (Erwinia carotovora subsp. atroseptica)).